The primary structure comprises 221 residues: Protein Thf1 (221 aa).

Residues 174-213 are a coiled coil; it reads TKERVEKDVNLYKSSLDKIEKALELIEMNIKDEKRRNKER.

It belongs to the THF1 family.

Its function is as follows. May be involved in photosynthetic membrane biogenesis. This is Protein Thf1 from Prochlorococcus marinus (strain MIT 9211).